Reading from the N-terminus, the 370-residue chain is MKSFSLQTRLYSGQGSLDVLKRLTNKHIWIICDGFLARSPLIEKLRDALPADNHISIFSDITPDPTINTVVQGIAQMQSLRPDVVIGFGGGSALDAAKAIVWFSRQFGIEIETCVAIPTTSGTGSEVTSACVISDPDKGIKYPLFNNALYPDMAILDPTLVVSVPPAITANTGMDVLTHALEAYVSTKASDFTDALAEKAAQIVFQYLPVAVSKGDCLATRGKMHNASTLAGMAFSQAGLGINHAIAHQLGGQFHLPHGLANALLLTHVIHFNARDPRAAKRYARFAKACHLCPDNANDTAALNALIRHIELLKKQCALPSFADALKDGKQAWSQRIPSMVQAALADVTLQTNPRVADASAMQELLEELL.

The protein belongs to the iron-containing alcohol dehydrogenase family. In terms of assembly, interacts with PduP, probably via the N-terminus of PduQ. It depends on Fe cation as a cofactor.

The protein resides in the bacterial microcompartment. It catalyses the reaction 1-propanol + NAD(+) = propanal + NADH + H(+). It participates in polyol metabolism; 1,2-propanediol degradation. An iron-dependent alcohol dehydrogenase required for optimal 1,2-propanediol (1,2-PD) degradation. NAD(+) and NADH are regenerated internally within the bacterial microcompartment (BMC) dedicated to 1,2-PD degradation by the PduP and PduQ enzymes, which reduce NAD(+) and oxidize NADH respectively, although there must also be cofactor transport across the BMC. Functionally, expression of a cosmid containing the full 21-gene pdu operon in E.coli allows E.coli to grow on 1,2-propanediol (1,2-PD) with the appearance of bacterial microcompartments (BMC) in its cytoplasm. In terms of biological role, the 1,2-PD-specific bacterial microcompartment (BMC) concentrates low levels of 1,2-PD catabolic enzymes, concentrates volatile reaction intermediates thus enhancing pathway flux and keeps the level of toxic, mutagenic propionaldehyde low. This chain is 1-propanol dehydrogenase PduQ, found in Citrobacter freundii.